The primary structure comprises 320 residues: o-succinylbenzoate synthase (320 aa).

Lysine 133 functions as the Proton donor in the catalytic mechanism. Positions 161, 190, and 213 each coordinate Mg(2+). Lysine 235 (proton acceptor) is an active-site residue.

Belongs to the mandelate racemase/muconate lactonizing enzyme family. MenC type 1 subfamily. The cofactor is a divalent metal cation.

The enzyme catalyses (1R,6R)-6-hydroxy-2-succinyl-cyclohexa-2,4-diene-1-carboxylate = 2-succinylbenzoate + H2O. The protein operates within quinol/quinone metabolism; 1,4-dihydroxy-2-naphthoate biosynthesis; 1,4-dihydroxy-2-naphthoate from chorismate: step 4/7. Its pathway is quinol/quinone metabolism; menaquinone biosynthesis. In terms of biological role, converts 2-succinyl-6-hydroxy-2,4-cyclohexadiene-1-carboxylate (SHCHC) to 2-succinylbenzoate (OSB). The sequence is that of o-succinylbenzoate synthase from Shigella boydii serotype 4 (strain Sb227).